We begin with the raw amino-acid sequence, 489 residues long: Protein LMBR1L (489 aa).

Residues 1-21 lie on the Extracellular side of the membrane; the sequence is MEAPDCEVLSVREQLFHERIR. Positions 1–59 are interaction with LGB; that stretch reads MEAPDCEVLSVREQLFHERIRECIISTLLFATLYILCHIFLTRFKKPAEFTTVDDADAT. An LCN1-binding region spans residues 1–76; the sequence is MEAPDCEVLS…LCTFTLAIAL (76 aa). The helical transmembrane segment at 22–42 threads the bilayer; that stretch reads ECIISTLLFATLYILCHIFLT. Over 43–66 the chain is Cytoplasmic; the sequence is RFKKPAEFTTVDDADATVNKIALE. Residues 67 to 87 form a helical membrane-spanning segment; the sequence is LCTFTLAIALGAVLLLPFSII. The Extracellular portion of the chain corresponds to 88-114; the sequence is SNEVLLSLPRNYYIQWLNGSLIHGLWN. A helical membrane pass occupies residues 115-135; sequence LVFLFSNLSLIFLMPFAYFFT. The Cytoplasmic portion of the chain corresponds to 136–154; the sequence is ESEGFAGSRKGVLGRVYET. Residues 155 to 175 form a helical membrane-spanning segment; the sequence is VVMLMLLTLLVLGMVWVASAI. Topologically, residues 176 to 196 are extracellular; that stretch reads VDNNKASRESLYDFWEYYLPY. A helical transmembrane segment spans residues 197–217; the sequence is LYSCISFLGVLLLLVCTPLGL. Residues 218 to 305 are Cytoplasmic-facing; sequence ARMFSVTGKL…NLGYPLAMLC (88 aa). A helical membrane pass occupies residues 306–326; the sequence is LLVLTGLSVLIVAIHILELLI. Residues 327 to 350 are Extracellular-facing; the sequence is DEAAMPRGMQGASLGQVSFSKLGS. The chain crosses the membrane as a helical span at residues 351-371; the sequence is FGAVVQVVLIFYLMVSSVVGF. The Cytoplasmic portion of the chain corresponds to 372–388; sequence YSSPLFRSLRPRWHDTA. The chain crosses the membrane as a helical span at residues 389–409; sequence MTQIIGNCVCLLVLSSALPVF. Residues 410–431 lie on the Extracellular side of the membrane; sequence SRTLGLTRFDLLGDFGRFNWLG. A helical transmembrane segment spans residues 432–452; that stretch reads NFYIVFLYNAAFAGLTTLCLV. Topologically, residues 453–489 are cytoplasmic; the sequence is KTFTAAVRAELIRAFGLDRLPLPVSGFPRASRKTQHQ.

It belongs to the LIMR family. Dimer. Can also form higher oligomers. Interacts with LCN1; this interaction mediates the endocytosis of LCN1. Interacts with UBAC2, FAF2, VCP, AMFR, ZNRF3, CTNNB1, LRP6, GSK3A, GSK3B, FZD6, DVL2 and RNF43. Interaction with LGB and SCGB1A1 is controversial.

The protein resides in the cell membrane. It localises to the endoplasmic reticulum membrane. In terms of biological role, plays an essential role in lymphocyte development by negatively regulating the canonical Wnt signaling pathway. In association with UBAC2 and E3 ubiquitin-protein ligase AMFR, promotes the ubiquitin-mediated degradation of CTNNB1 and Wnt receptors FZD6 and LRP6. LMBR1L stabilizes the beta-catenin destruction complex that is required for regulating CTNNB1 levels. Acts as a LCN1 receptor and can mediate its endocytosis. This chain is Protein LMBR1L (LMBR1L), found in Macaca fascicularis (Crab-eating macaque).